Reading from the N-terminus, the 161-residue chain is Phenolic acid decarboxylase PadC (161 aa).

Substrate is bound by residues Tyr-11 and Tyr-13. Catalysis depends on Tyr-19, which acts as the Proton donor. Position 41 (Arg-41) interacts with substrate. Glu-64 (proton acceptor) is an active-site residue.

Belongs to the PadC family. In terms of assembly, homodimer.

The enzyme catalyses (E)-4-coumarate + H(+) = 4-vinylphenol + CO2. It carries out the reaction (E)-cinnamate + H(+) = styrene + CO2. It catalyses the reaction (E)-ferulate + H(+) = 2-methoxy-4-vinylphenol + CO2. Involved in the decarboxylation and detoxification of phenolic derivatives. It is able to catalyze the decarboxylation of ferulic, p-coumaric and caffeic acids. The polypeptide is Phenolic acid decarboxylase PadC (padC) (Bacillus subtilis (strain 168)).